The following is a 172-amino-acid chain: 3-hydroxydecanoyl-[acyl-carrier-protein] dehydratase (172 aa).

The active site involves His-71.

This sequence belongs to the thioester dehydratase family. FabA subfamily. In terms of assembly, homodimer.

Its subcellular location is the cytoplasm. The enzyme catalyses a (3R)-hydroxyacyl-[ACP] = a (2E)-enoyl-[ACP] + H2O. The catalysed reaction is (3R)-hydroxydecanoyl-[ACP] = (2E)-decenoyl-[ACP] + H2O. It carries out the reaction (2E)-decenoyl-[ACP] = (3Z)-decenoyl-[ACP]. The protein operates within lipid metabolism; fatty acid biosynthesis. Functionally, necessary for the introduction of cis unsaturation into fatty acids. Catalyzes the dehydration of (3R)-3-hydroxydecanoyl-ACP to E-(2)-decenoyl-ACP and then its isomerization to Z-(3)-decenoyl-ACP. Can catalyze the dehydratase reaction for beta-hydroxyacyl-ACPs with saturated chain lengths up to 16:0, being most active on intermediate chain length. The polypeptide is 3-hydroxydecanoyl-[acyl-carrier-protein] dehydratase (Escherichia coli O127:H6 (strain E2348/69 / EPEC)).